Here is a 156-residue protein sequence, read N- to C-terminus: Transcription elongation factor GreA (156 aa).

Residues 46 to 66 (AEYHAAREKQSFVEGRIKELE) adopt a coiled-coil conformation.

Belongs to the GreA/GreB family.

In terms of biological role, necessary for efficient RNA polymerase transcription elongation past template-encoded arresting sites. The arresting sites in DNA have the property of trapping a certain fraction of elongating RNA polymerases that pass through, resulting in locked ternary complexes. Cleavage of the nascent transcript by cleavage factors such as GreA or GreB allows the resumption of elongation from the new 3'terminus. GreA releases sequences of 2 to 3 nucleotides. This Paracoccus denitrificans (strain Pd 1222) protein is Transcription elongation factor GreA.